The following is a 288-amino-acid chain: Ribosomal protein L11 methyltransferase (288 aa).

4 residues coordinate S-adenosyl-L-methionine: T141, G164, D186, and N227.

The protein belongs to the methyltransferase superfamily. PrmA family.

It localises to the cytoplasm. The catalysed reaction is L-lysyl-[protein] + 3 S-adenosyl-L-methionine = N(6),N(6),N(6)-trimethyl-L-lysyl-[protein] + 3 S-adenosyl-L-homocysteine + 3 H(+). Methylates ribosomal protein L11. This chain is Ribosomal protein L11 methyltransferase, found in Myxococcus xanthus (strain DK1622).